The chain runs to 440 residues: Tubulin beta-3 chain (440 aa).

GTP-binding residues include Q2, E60, S129, G133, T134, G135, N195, and N217. Position 60 (E60) interacts with Mg(2+). The interval 411–440 (SEYQQYQDATADEEGEYEDEEEEEPEHGYE) is disordered. Residues 420–440 (TADEEGEYEDEEEEEPEHGYE) show a composition bias toward acidic residues.

This sequence belongs to the tubulin family. Dimer of alpha and beta chains. A typical microtubule is a hollow water-filled tube with an outer diameter of 25 nm and an inner diameter of 15 nM. Alpha-beta heterodimers associate head-to-tail to form protofilaments running lengthwise along the microtubule wall with the beta-tubulin subunit facing the microtubule plus end conferring a structural polarity. Microtubules usually have 13 protofilaments but different protofilament numbers can be found in some organisms and specialized cells. Requires Mg(2+) as cofactor.

It is found in the cytoplasm. The protein localises to the cytoskeleton. Functionally, tubulin is the major constituent of microtubules, a cylinder consisting of laterally associated linear protofilaments composed of alpha- and beta-tubulin heterodimers. Microtubules grow by the addition of GTP-tubulin dimers to the microtubule end, where a stabilizing cap forms. Below the cap, tubulin dimers are in GDP-bound state, owing to GTPase activity of alpha-tubulin. The protein is Tubulin beta-3 chain (TUBB3) of Pisum sativum (Garden pea).